A 153-amino-acid chain; its full sequence is Natriuretic peptides A (153 aa).

Positions Met-1–Ala-25 are cleaved as a signal peptide. 2 consecutive propeptides follow at residues Asn-26–Arg-123 and Asp-93–Glu-103. The disordered stretch occupies residues Glu-54–Thr-101. A Phosphoserine modification is found at Ser-129. An intrachain disulfide couples Cys-130 to Cys-146. The important for degradation of atrial natriuretic peptide by IDE stretch occupies residues Asn-147–Tyr-151.

This sequence belongs to the natriuretic peptide family. In terms of assembly, homodimer; disulfide-linked antiparallel dimer. The precursor molecule is proteolytically cleaved by CORIN at Arg-123 to produce the atrial natriuretic peptide. Undergoes further proteolytic cleavage by unknown proteases to give rise to long-acting natriuretic peptide, vessel dilator and kaliuretic peptide. Additional processing gives rise to the auriculin and atriopeptin peptides. In the kidneys, alternative processing by an unknown protease results in the peptide urodilatin. In terms of processing, cleavage by MME initiates degradation of the factor and thereby regulates its activity. Degradation by IDE results in reduced activation of NPR1 (in vitro). During IDE degradation, the resulting products can temporarily stimulate NPR2 to produce cGMP, before the fragments are completely degraded and inactivated by IDE (in vitro). Post-translationally, degraded by IDE. Phosphorylation on Ser-129 decreases vasorelaxant activity.

Its subcellular location is the secreted. It localises to the perikaryon. The protein localises to the cell projection. In terms of biological role, hormone that plays a key role in mediating cardio-renal homeostasis, and is involved in vascular remodeling and regulating energy metabolism. Acts by specifically binding and stimulating NPR1 to produce cGMP, which in turn activates effector proteins, such as PRKG1, that drive various biological responses. Regulates vasodilation, natriuresis, diuresis and aldosterone synthesis and is therefore essential for regulating blood pressure, controlling the extracellular fluid volume and maintaining the fluid-electrolyte balance. Also involved in inhibiting cardiac remodeling and cardiac hypertrophy by inducing cardiomyocyte apoptosis and attenuating the growth of cardiomyocytes and fibroblasts. Plays a role in female pregnancy by promoting trophoblast invasion and spiral artery remodeling in uterus, and thus prevents pregnancy-induced hypertension. In adipose tissue, acts in various cGMP- and PKG-dependent pathways to regulate lipid metabolism and energy homeostasis. This includes up-regulating lipid metabolism and mitochondrial oxygen utilization by activating the AMP-activated protein kinase (AMPK), and increasing energy expenditure by acting via MAPK11 to promote the UCP1-dependent thermogenesis of brown adipose tissue. Binds the clearance receptor NPR3 which removes the hormone from circulation. Its function is as follows. May have a role in cardio-renal homeostasis through regulation of natriuresis, diuresis, vasodilation, and inhibiting aldosterone synthesis. In vitro, promotes the production of cGMP and induces vasodilation. May promote natriuresis, at least in part, by enhancing prostaglandin E2 synthesis resulting in the inhibition of renal Na+-K+-ATPase. However reports on the involvement of this peptide in mammal blood volume and blood pressure homeostasis are conflicting; according to a report, in vivo it is not sufficient to activate cGMP and does not inhibit collecting duct transport nor effect diuresis and natriuresis. Appears to bind to specific receptors that are distinct from the receptors bound by atrial natriuretic peptide and vessel dilator. Possibly enhances protein excretion in urine by decreasing proximal tubular protein reabsorption. May have a role in cardio-renal homeostasis through regulation of natriuresis, diuresis, and vasodilation. In vitro, promotes the production of cGMP and induces vasodilation. May promote natriuresis, at least in part, by enhancing prostaglandin E2 synthesis resulting in the inhibition of renal Na+-K+-ATPase. However reports on the involvement of this peptide in mammal blood volume and blood pressure homeostasis are conflicting; according to a report it is not sufficient to activate cGMP and does not inhibit collecting duct transport nor effect diuresis and natriuresis. Appears to bind to specific receptors that are distinct from the receptors bound by the atrial natriuretic and long-acting natriuretic peptides. Possibly functions in protein excretion in urine by maintaining the integrity of the proximal tubules and enhancing protein excretion by decreasing proximal tubular protein reabsorption. Functionally, may have a role in cardio-renal homeostasis through regulation of diuresis and inhibiting aldosterone synthesis. In vitro, promotes the production of cGMP and induces vasodilation. May promote natriuresis, at least in part, by enhancing prostaglandin E2 synthesis resulting in the inhibition of renal Na+-K+-ATPase. May have a role in potassium excretion but not sodium excretion (natriuresis). Possibly enhances protein excretion in urine by decreasing proximal tubular protein reabsorption. In terms of biological role, hormone produced in the kidneys that appears to be important for maintaining cardio-renal homeostasis. Mediates vasodilation, natriuresis and diuresis primarily in the renal system, in order to maintain the extracellular fluid volume and control the fluid-electrolyte balance. Specifically binds and stimulates cGMP production by renal transmembrane receptors, likely NPR1. Urodilatin not ANP, may be the natriuretic peptide responsible for the regulation of sodium and water homeostasis in the kidney. Its function is as follows. May have a role in cardio-renal homeostasis through regulation of natriuresis and vasodilation. In vivo promotes natriuresis and in vitro, vasodilates renal artery strips. May have a role in cardio-renal homeostasis through regulation of regulation of natriuresis and vasodilation. In vivo promotes natriuresis. In vitro, vasodilates intestinal smooth muscle but not smooth muscle strips. Functionally, may have a role in cardio-renal homeostasis through regulation of natriuresis and vasodilation. In vivo promotes natriuresis. In vitro, selectively vasodilates intestinal and vascular smooth muscle strips. In terms of biological role, may have a role in cardio-renal homeostasis through regulation of natriuresis and vasodilation. In vivo promotes natriuresis. In vitro, selectively vasodilates intestinal smooth muscle but not vascular smooth muscle strips. In Oryctolagus cuniculus (Rabbit), this protein is Natriuretic peptides A (NPPA).